A 372-amino-acid chain; its full sequence is Integral membrane protein GPR137B (372 aa).

The Lumenal segment spans residues 1–32; that stretch reads MESPAWDATKNDSLPPTLTPAVPPYVKLGLTT. A glycan (N-linked (GlcNAc...) asparagine) is linked at asparagine 11. Residues 33 to 53 form a helical membrane-spanning segment; sequence VYTIFYLLLFAFVYVQLWLVL. At 54-64 the chain is on the cytoplasmic side; sequence HYKHKRFSYQT. A helical membrane pass occupies residues 65 to 85; sequence VFLFLCLLWASLRAVLFSFYF. Over 86 to 93 the chain is Lumenal; that stretch reads RNFVEANR. A helical membrane pass occupies residues 94–114; the sequence is LGAFTFWLLYCFPVCLQFFTL. The Cytoplasmic segment spans residues 115–144; it reads TLMNLYFARVIYKAKSKYLPELIKYRLPLY. A helical membrane pass occupies residues 145-165; that stretch reads LAFLVISLLFLVVNLTCAILV. Residues 166–173 are Lumenal-facing; sequence KTDYAETK. A helical transmembrane segment spans residues 174–194; sequence VIVSIRVAINDTLFVLCAVSL. At 195–222 the chain is on the cytoplasmic side; it reads SVCLYKISKMSLAGVYLESKGSSVCQVT. Residues 223-243 traverse the membrane as a helical segment; sequence CIGVTVILLYTSRACYNLVVL. The Lumenal portion of the chain corresponds to 244-276; that stretch reads SLSDSRYSSFDYDWYNVSDQADLKCKLGDAGYV. Residue asparagine 259 is glycosylated (N-linked (GlcNAc...) asparagine). The chain crosses the membrane as a helical span at residues 277–297; the sequence is VFGIILFIWELFPTSLVVYFF. Over 298 to 372 the chain is Cytoplasmic; that stretch reads RVRNSAQDMT…QTGSLQRDST (75 aa).

This sequence belongs to the GPR137 family.

It is found in the lysosome membrane. Its function is as follows. Lysosomal integral membrane protein that regulates the localization and activity of mTORC1, a signaling complex promoting cell growth in response to growth factors, energy levels, and amino acids. Interacts with Rag GTPases and increases the lysosomial localization and activity of Rag GTPases and thereby regulates mTORC1 translocation and activity in lysosome. Involved in the regulation of lysosomal morphology and autophagy. Also acts as a negative regulator of osteoclast activity. In terms of biological role, also acts as a negative regulator of osteoclast activity. This is Integral membrane protein GPR137B (gpr137b) from Xenopus laevis (African clawed frog).